The chain runs to 352 residues: Homeobox protein Mohawk (352 aa).

A disordered region spans residues 19-54 (GASERERGGRPYSGVLDSPHARPEVGIPDGPPLKDN). The segment at residues 71–132 (VRHKRQALQD…NARRRLKNTV (62 aa)) is a DNA-binding region (homeobox; TALE-type). 2 disordered regions span residues 159 to 189 (VSSD…VHHP) and 245 to 301 (TRQR…PSKD).

This sequence belongs to the TALE/IRO homeobox family.

The protein localises to the nucleus. Functionally, may act as a morphogenetic regulator of cell adhesion. This chain is Homeobox protein Mohawk (MKX), found in Homo sapiens (Human).